Reading from the N-terminus, the 206-residue chain is MRTKKLPALRVGVGGPVGSGKTTLLEMLCKAMRERYDLVAITNDIYTKEDQRLLTISGALPAERIMGVETGGCPHTAIREDASINLEAVDRMLAKFPDADVVFIESGGDNLAATFSPELSDLTIYVIDVAGGEKIPRKGGPGITKSDLLIINKTDLAPYVGASLEVMESDTRKMRGDRPFVMCNLRAQGGLDEVIRFIERQGMLAA.

Position 15–22 (15–22 (GPVGSGKT)) interacts with GTP.

This sequence belongs to the SIMIBI class G3E GTPase family. UreG subfamily. In terms of assembly, homodimer. UreD, UreF and UreG form a complex that acts as a GTP-hydrolysis-dependent molecular chaperone, activating the urease apoprotein by helping to assemble the nickel containing metallocenter of UreC. The UreE protein probably delivers the nickel.

The protein resides in the cytoplasm. Its function is as follows. Facilitates the functional incorporation of the urease nickel metallocenter. This process requires GTP hydrolysis, probably effectuated by UreG. This chain is Urease accessory protein UreG, found in Ralstonia pickettii (strain 12J).